The chain runs to 252 residues: Fructose-1,6-bisphosphatase/inositol-1-monophosphatase (252 aa).

Positions 38, 40, 67, 82, 84, and 85 each coordinate Mg(2+). Substrate contacts are provided by residues 85–87 (DGT), Arg-167, Ala-172, and Arg-191. Residue Asp-200 coordinates Mg(2+).

Belongs to the inositol monophosphatase superfamily. FBPase class 4 family. In terms of assembly, homodimer. Mg(2+) serves as cofactor. Requires Mn(2+) as cofactor.

It catalyses the reaction beta-D-fructose 1,6-bisphosphate + H2O = beta-D-fructose 6-phosphate + phosphate. The catalysed reaction is a myo-inositol phosphate + H2O = myo-inositol + phosphate. Its activity is regulated as follows. Both FBPase and IMPase activities are inhibited by Ca(2+). In contrast to mammalian I-1-P phosphatases, is only very weakly inhibited by Li(+) (with an IC(50) of about 290 mM). In terms of biological role, phosphatase with broad specificity; it can dephosphorylate fructose 1,6-bisphosphate, both D and L isomers of inositol-1-phosphate (I-1-P), 2'-AMP, pNPP, inositol-2-phosphate, beta-glycerol phosphate, and alpha-D-glucose-1-phosphate. Cannot hydrolyze glucose-6-phosphate and fructose-6-phosphate. May be involved in the biosynthesis of a unique osmolyte, di-myo-inositol 1,1-phosphate. The chain is Fructose-1,6-bisphosphatase/inositol-1-monophosphatase (suhB) from Archaeoglobus fulgidus (strain ATCC 49558 / DSM 4304 / JCM 9628 / NBRC 100126 / VC-16).